The chain runs to 571 residues: Proline--tRNA ligase (571 aa).

It belongs to the class-II aminoacyl-tRNA synthetase family. ProS type 1 subfamily. In terms of assembly, homodimer.

The protein resides in the cytoplasm. The enzyme catalyses tRNA(Pro) + L-proline + ATP = L-prolyl-tRNA(Pro) + AMP + diphosphate. Functionally, catalyzes the attachment of proline to tRNA(Pro) in a two-step reaction: proline is first activated by ATP to form Pro-AMP and then transferred to the acceptor end of tRNA(Pro). As ProRS can inadvertently accommodate and process non-cognate amino acids such as alanine and cysteine, to avoid such errors it has two additional distinct editing activities against alanine. One activity is designated as 'pretransfer' editing and involves the tRNA(Pro)-independent hydrolysis of activated Ala-AMP. The other activity is designated 'posttransfer' editing and involves deacylation of mischarged Ala-tRNA(Pro). The misacylated Cys-tRNA(Pro) is not edited by ProRS. This is Proline--tRNA ligase from Leuconostoc citreum (strain KM20).